Here is a 155-residue protein sequence, read N- to C-terminus: Large ribosomal subunit protein uL16 (155 aa).

It belongs to the universal ribosomal protein uL16 family. In terms of assembly, part of the 50S ribosomal subunit.

Its function is as follows. Binds 23S rRNA and is also seen to make contacts with the A and possibly P site tRNAs. This Synechococcus sp. (strain CC9311) protein is Large ribosomal subunit protein uL16.